The primary structure comprises 194 residues: Probable RNA 2'-phosphotransferase (194 aa).

This sequence belongs to the KptA/TPT1 family.

Functionally, removes the 2'-phosphate from RNA via an intermediate in which the phosphate is ADP-ribosylated by NAD followed by a presumed transesterification to release the RNA and generate ADP-ribose 1''-2''-cyclic phosphate (APPR&gt;P). May function as an ADP-ribosylase. The polypeptide is Probable RNA 2'-phosphotransferase (Burkholderia lata (strain ATCC 17760 / DSM 23089 / LMG 22485 / NCIMB 9086 / R18194 / 383)).